A 273-amino-acid chain; its full sequence is Glutamate 5-kinase (273 aa).

Lysine 15 is an ATP binding site. Substrate contacts are provided by serine 55, aspartate 142, and asparagine 158. ATP contacts are provided by residues 178–179 (SD) and 220–226 (TGGMLSK).

The protein belongs to the glutamate 5-kinase family.

The protein resides in the cytoplasm. It carries out the reaction L-glutamate + ATP = L-glutamyl 5-phosphate + ADP. It functions in the pathway amino-acid biosynthesis; L-proline biosynthesis; L-glutamate 5-semialdehyde from L-glutamate: step 1/2. Functionally, catalyzes the transfer of a phosphate group to glutamate to form L-glutamate 5-phosphate. This chain is Glutamate 5-kinase, found in Streptococcus pyogenes serotype M1.